The sequence spans 233 residues: ATP-dependent Clp protease proteolytic subunit 2 (233 aa).

Catalysis depends on Ser116, which acts as the Nucleophile. Residue His141 is part of the active site. The tract at residues Glu214 to Ala233 is disordered.

The protein belongs to the peptidase S14 family. Fourteen ClpP subunits assemble into 2 heptameric rings which stack back to back to give a disk-like structure with a central cavity, resembling the structure of eukaryotic proteasomes.

The protein resides in the cytoplasm. It carries out the reaction Hydrolysis of proteins to small peptides in the presence of ATP and magnesium. alpha-casein is the usual test substrate. In the absence of ATP, only oligopeptides shorter than five residues are hydrolyzed (such as succinyl-Leu-Tyr-|-NHMec, and Leu-Tyr-Leu-|-Tyr-Trp, in which cleavage of the -Tyr-|-Leu- and -Tyr-|-Trp bonds also occurs).. Cleaves peptides in various proteins in a process that requires ATP hydrolysis. Has a chymotrypsin-like activity. Plays a major role in the degradation of misfolded proteins. The sequence is that of ATP-dependent Clp protease proteolytic subunit 2 from Salinibacter ruber (strain DSM 13855 / M31).